We begin with the raw amino-acid sequence, 152 residues long: Small ribosomal subunit protein uS17A (152 aa).

It belongs to the universal ribosomal protein uS17 family. As to quaternary structure, component of the small ribosomal subunit (SSU). Mature yeast ribosomes consist of a small (40S) and a large (60S) subunit. The 40S small subunit contains 1 molecule of ribosomal RNA (18S rRNA) and at least 33 different proteins. The large 60S subunit contains 3 rRNA molecules (25S, 5.8S and 5S rRNA) and at least 46 different proteins.

The protein localises to the cytoplasm. The protein resides in the nucleus. Component of the ribosome, a large ribonucleoprotein complex responsible for the synthesis of proteins in the cell. The small ribosomal subunit (SSU) binds messenger RNAs (mRNAs) and translates the encoded message by selecting cognate aminoacyl-transfer RNA (tRNA) molecules. The large subunit (LSU) contains the ribosomal catalytic site termed the peptidyl transferase center (PTC), which catalyzes the formation of peptide bonds, thereby polymerizing the amino acids delivered by tRNAs into a polypeptide chain. The nascent polypeptides leave the ribosome through a tunnel in the LSU and interact with protein factors that function in enzymatic processing, targeting, and the membrane insertion of nascent chains at the exit of the ribosomal tunnel. This chain is Small ribosomal subunit protein uS17A (rps1101), found in Schizosaccharomyces pombe (strain 972 / ATCC 24843) (Fission yeast).